A 181-amino-acid polypeptide reads, in one-letter code: Peptide methionine sulfoxide reductase MsrA (181 aa).

The active site involves Cys-14.

This sequence belongs to the MsrA Met sulfoxide reductase family.

It carries out the reaction L-methionyl-[protein] + [thioredoxin]-disulfide + H2O = L-methionyl-(S)-S-oxide-[protein] + [thioredoxin]-dithiol. It catalyses the reaction [thioredoxin]-disulfide + L-methionine + H2O = L-methionine (S)-S-oxide + [thioredoxin]-dithiol. Has an important function as a repair enzyme for proteins that have been inactivated by oxidation. Catalyzes the reversible oxidation-reduction of methionine sulfoxide in proteins to methionine. The polypeptide is Peptide methionine sulfoxide reductase MsrA (Bacillus licheniformis (strain ATCC 14580 / DSM 13 / JCM 2505 / CCUG 7422 / NBRC 12200 / NCIMB 9375 / NCTC 10341 / NRRL NRS-1264 / Gibson 46)).